The primary structure comprises 71 residues: uncharacterized protein (71 aa).

A helical transmembrane segment spans residues 12-32; it reads FLVSIAFFGLAPTIPLLAIAL.

It localises to the membrane. This is an uncharacterized protein from Sinorhizobium fredii (strain NBRC 101917 / NGR234).